The primary structure comprises 430 residues: Nacrein-like protein P2 (430 aa).

Asn-27 is a glycosylation site (N-linked (GlcNAc...) asparagine). An Alpha-carbonic anhydrase domain is found at 33 to 429 (AGFSYDRSIC…KNKVTVYKSF (397 aa)). The Zn(2+) site is built by His-132, His-134, and His-157. The disordered stretch occupies residues 201–312 (DEPDDEECKR…GENGHKHGCR (112 aa)). Residues 207–219 (ECKRILKGHHPDN) are compositionally biased toward basic and acidic residues. A compositionally biased stretch (low complexity) spans 220 to 304 (NENGNGDNGN…NNGENGNNGE (85 aa)). Tandem repeats lie at residues 225 to 227 (GDN), 228 to 230 (GNN), 231 to 233 (GYN), 234 to 236 (GDN), 237 to 239 (GNN), 240 to 242 (GDN), 243 to 245 (GNN), 246 to 248 (GYN), 249 to 251 (GDN), 252 to 254 (GNN), 255 to 257 (GVN), 258 to 260 (GNN), 261 to 263 (GYN), 264 to 266 (GDN), 267 to 269 (GNN), 270 to 272 (GDN), 273 to 275 (GNN), 276 to 278 (GYN), 279 to 281 (GDN), 282 to 284 (GNN), 285 to 287 (GDN), 288 to 290 (GNN), 291 to 293 (GEN), 294 to 296 (GNN), 297 to 299 (GEN), 300 to 301 (GN), and 303 to 305 (GEN). Residues 225–305 (GDNGNNGYNG…NGENGNNGEN (81 aa)) are 27 X 3 AA approximate tandem repeats of G-X-N. Substrate is bound at residue 370–371 (TT).

The protein belongs to the alpha-carbonic anhydrase family. As to quaternary structure, homooligomer; disulfide-linked. May also be disulfide-linked to insoluble organic matrix. Zn(2+) is required as a cofactor. In terms of tissue distribution, expressed in the mantle.

Its subcellular location is the secreted. It is found in the extracellular space. It localises to the extracellular matrix. The catalysed reaction is hydrogencarbonate + H(+) = CO2 + H2O. Acts as a negative regulator for calcification in the shells of mollusks. May function both as a calcium concentrator and as a carbonic anhydrase required for production of carbonate ions, which are assembled to CaCO(3) at mineralization sites. Is important for shell formation in both the calcitic prismatic layer and the aragonitic nacreous layer. Shows inhibitory activity of crystal formation when present in free state but, when attached to the insoluble matrix, may regulate the form and size of aragonite crystal. This is Nacrein-like protein P2 from Mizuhopecten yessoensis (Japanese scallop).